A 277-amino-acid chain; its full sequence is Shikimate dehydrogenase (NADP(+)) (277 aa).

Shikimate contacts are provided by residues 15-17 (SLS) and threonine 62. Lysine 66 serves as the catalytic Proton acceptor. Shikimate-binding residues include asparagine 87 and aspartate 102. NADP(+)-binding positions include 127–131 (GAGGA), 151–156 (NRTRDK), and isoleucine 219. Tyrosine 221 serves as a coordination point for shikimate. Glycine 242 contributes to the NADP(+) binding site.

It belongs to the shikimate dehydrogenase family. As to quaternary structure, homodimer.

The catalysed reaction is shikimate + NADP(+) = 3-dehydroshikimate + NADPH + H(+). The protein operates within metabolic intermediate biosynthesis; chorismate biosynthesis; chorismate from D-erythrose 4-phosphate and phosphoenolpyruvate: step 4/7. In terms of biological role, involved in the biosynthesis of the chorismate, which leads to the biosynthesis of aromatic amino acids. Catalyzes the reversible NADPH linked reduction of 3-dehydroshikimate (DHSA) to yield shikimate (SA). This Bacillus mycoides (strain KBAB4) (Bacillus weihenstephanensis) protein is Shikimate dehydrogenase (NADP(+)).